The following is a 327-amino-acid chain: Beta-ketoacyl-[acyl-carrier-protein] synthase III 2 (327 aa).

Catalysis depends on residues Cys114 and His251. The interval 252–256 (SANLR) is ACP-binding. Asn281 is an active-site residue.

This sequence belongs to the thiolase-like superfamily. FabH family. As to quaternary structure, homodimer.

It is found in the cytoplasm. The enzyme catalyses malonyl-[ACP] + acetyl-CoA + H(+) = 3-oxobutanoyl-[ACP] + CO2 + CoA. The protein operates within lipid metabolism; fatty acid biosynthesis. In terms of biological role, catalyzes the condensation reaction of fatty acid synthesis by the addition to an acyl acceptor of two carbons from malonyl-ACP. Catalyzes the first condensation reaction which initiates fatty acid synthesis and may therefore play a role in governing the total rate of fatty acid production. Possesses both acetoacetyl-ACP synthase and acetyl transacylase activities. Its substrate specificity determines the biosynthesis of branched-chain and/or straight-chain of fatty acids. This Bacillus cereus (strain ATCC 14579 / DSM 31 / CCUG 7414 / JCM 2152 / NBRC 15305 / NCIMB 9373 / NCTC 2599 / NRRL B-3711) protein is Beta-ketoacyl-[acyl-carrier-protein] synthase III 2.